The primary structure comprises 362 residues: MAEQNCEIAWFSALCDDDYEFLGVPDKYLQSSWEHCRNIVLRAEEGGFDNILLPSGYQLGLDTTAFAAAVATQVRRIKLLWATRMGEDWPPQLARRIATLDRILGPNAEGTGGRLNVNIISSDMPGETIASGPRYARATEIMKIVRTLLNGEHLDFQGEFYKLKLDPPRIGTISGRCPAFYFGGLSHDARECAAEASDVYLMWPDTMDKVRETIADMKARAANYGRTLRFGYRVHVVVRETEDEARAYADRLLSKLDDEAGKAIREKSLDAKNFGVQRQQELRGAADGDGFVEENLWTGIGRARSGCGAAIVGTPDQVLAKLRAYQAEGIEAFILSGYPHAQEADMFARYVLPHINHGPLNI.

The protein belongs to the SsuD family.

It carries out the reaction 6-sulfo-D-quinovose + FMNH2 + O2 = 6-dehydro-D-glucose + FMN + sulfite + H2O + 2 H(+). In terms of biological role, part of the alkanesulfonate monooxygenase (sulfo-ASMO) pathway, a D-sulfoquinovose degradation pathway that enables the complete utilization of all carbons within sulfoquinovose (SQ) with concomitant production of inorganic sulfite. Catalyzes the oxidative desulfurization of sulfoquinovose to sulfite and 6-dehydro-D-glucose. The chain is Sulfoquinovose monooxygenase from Novosphingobium aromaticivorans (strain ATCC 700278 / DSM 12444 / CCUG 56034 / CIP 105152 / NBRC 16084 / F199).